The sequence spans 414 residues: Esterase FrsA (414 aa).

It belongs to the FrsA family.

The enzyme catalyses a carboxylic ester + H2O = an alcohol + a carboxylate + H(+). Its function is as follows. Catalyzes the hydrolysis of esters. In Salmonella choleraesuis (strain SC-B67), this protein is Esterase FrsA.